A 196-amino-acid polypeptide reads, in one-letter code: Holliday junction branch migration complex subunit RuvA (196 aa).

A domain I region spans residues 1 to 63; sequence MINKIYGKIV…DDDVKLFGFL (63 aa). The domain II stretch occupies residues 64–142; sequence NISEREVFED…KGDESSSYML (79 aa). Lys143 is a region of interest (flexible linker). The tract at residues 143–196 is domain III; the sequence is KFKELEQSIVNMGFDRKLVVVAFREIMLSDKFLILKEAEQEQFLFTETLKRLSV.

It belongs to the RuvA family. In terms of assembly, homotetramer. Forms an RuvA(8)-RuvB(12)-Holliday junction (HJ) complex. HJ DNA is sandwiched between 2 RuvA tetramers; dsDNA enters through RuvA and exits via RuvB. An RuvB hexamer assembles on each DNA strand where it exits the tetramer. Each RuvB hexamer is contacted by two RuvA subunits (via domain III) on 2 adjacent RuvB subunits; this complex drives branch migration. In the full resolvosome a probable DNA-RuvA(4)-RuvB(12)-RuvC(2) complex forms which resolves the HJ.

The protein localises to the cytoplasm. In terms of biological role, the RuvA-RuvB-RuvC complex processes Holliday junction (HJ) DNA during genetic recombination and DNA repair, while the RuvA-RuvB complex plays an important role in the rescue of blocked DNA replication forks via replication fork reversal (RFR). RuvA specifically binds to HJ cruciform DNA, conferring on it an open structure. The RuvB hexamer acts as an ATP-dependent pump, pulling dsDNA into and through the RuvAB complex. HJ branch migration allows RuvC to scan DNA until it finds its consensus sequence, where it cleaves and resolves the cruciform DNA. This is Holliday junction branch migration complex subunit RuvA from Borrelia duttonii (strain Ly).